The chain runs to 504 residues: Arabinose import ATP-binding protein AraG (504 aa).

2 consecutive ABC transporter domains span residues 8–243 (LSFR…MVGR) and 256–499 (YGEE…MPKV). 40–47 (GENGAGKS) provides a ligand contact to ATP.

This sequence belongs to the ABC transporter superfamily. Arabinose importer (TC 3.A.1.2.2) family. As to quaternary structure, the complex is composed of two ATP-binding proteins (AraG), two transmembrane proteins (AraH) and a solute-binding protein (AraF).

Its subcellular location is the cell inner membrane. It carries out the reaction L-arabinose(out) + ATP + H2O = L-arabinose(in) + ADP + phosphate + H(+). Its function is as follows. Part of the ABC transporter complex AraFGH involved in arabinose import. Responsible for energy coupling to the transport system. In Shigella dysenteriae serotype 1 (strain Sd197), this protein is Arabinose import ATP-binding protein AraG.